The chain runs to 359 residues: 3-isopropylmalate dehydrogenase (359 aa).

Position 76–89 (76–89 (GPKWDDPSAKTRPE)) interacts with NAD(+). R96, R106, R134, and D223 together coordinate substrate. D223, D247, and D251 together coordinate Mg(2+). NAD(+) is bound at residue 281-293 (GSAPDIAGKSVAN).

Belongs to the isocitrate and isopropylmalate dehydrogenases family. LeuB type 1 subfamily. As to quaternary structure, homodimer. Mg(2+) serves as cofactor. Requires Mn(2+) as cofactor.

The protein resides in the cytoplasm. It catalyses the reaction (2R,3S)-3-isopropylmalate + NAD(+) = 4-methyl-2-oxopentanoate + CO2 + NADH. It functions in the pathway amino-acid biosynthesis; L-leucine biosynthesis; L-leucine from 3-methyl-2-oxobutanoate: step 3/4. Functionally, catalyzes the oxidation of 3-carboxy-2-hydroxy-4-methylpentanoate (3-isopropylmalate) to 3-carboxy-4-methyl-2-oxopentanoate. The product decarboxylates to 4-methyl-2 oxopentanoate. This Rhodopirellula baltica (strain DSM 10527 / NCIMB 13988 / SH1) protein is 3-isopropylmalate dehydrogenase.